A 20-amino-acid polypeptide reads, in one-letter code: Antifungal protein 2 large subunit (20 aa).

Residues 1 to 20 are disordered; it reads PEDPQRRYQEXQREXRXQQE.

As to quaternary structure, heterodimer of a large and a small subunit.

Possesses antifungal activity against P.infestans but not F.graminearum. The polypeptide is Antifungal protein 2 large subunit (Malva parviflora (Little mallow)).